The following is a 353-amino-acid chain: Ion-translocating oxidoreductase complex subunit D (353 aa).

The next 4 helical transmembrane spans lie at 20–40 (IMLL…YYFG), 44–64 (IIQV…ILHL), 77–108 (SALL…AIII), and 123–143 (PAMV…TSWL). T187 carries the FMN phosphoryl threonine modification. 4 helical membrane-spanning segments follow: residues 214-234 (VIAG…GVFL), 242-262 (WHIP…GWLL), 267-287 (LVTP…FFIA), and 301-318 (LLYG…RSYG).

Belongs to the NqrB/RnfD family. In terms of assembly, the complex is composed of six subunits: RnfA, RnfB, RnfC, RnfD, RnfE and RnfG. FMN serves as cofactor.

Its subcellular location is the cell inner membrane. Its function is as follows. Part of a membrane-bound complex that couples electron transfer with translocation of ions across the membrane. The chain is Ion-translocating oxidoreductase complex subunit D from Erwinia tasmaniensis (strain DSM 17950 / CFBP 7177 / CIP 109463 / NCPPB 4357 / Et1/99).